Here is a 137-residue protein sequence, read N- to C-terminus: Large ribosomal subunit protein uL16 (137 aa).

The segment covering 1–17 (MLQPKRTKFRKTHKGRN) has biased composition (basic residues). The tract at residues 1–23 (MLQPKRTKFRKTHKGRNRGLAQN) is disordered.

The protein belongs to the universal ribosomal protein uL16 family. In terms of assembly, part of the 50S ribosomal subunit.

Its function is as follows. Binds 23S rRNA and is also seen to make contacts with the A and possibly P site tRNAs. This chain is Large ribosomal subunit protein uL16, found in Pseudoalteromonas translucida (strain TAC 125).